The sequence spans 727 residues: Ankyrin repeat domain-containing protein 6 (727 aa).

8 ANK repeats span residues 9 to 38 (ALSE…RVAV), 41 to 70 (HGRT…DLDV), 74 to 103 (GDQT…ALDR), 107 to 136 (DGNT…NVLA), 140 to 169 (AGNT…RADL), 173 to 202 (AGDT…SVHE), 206 to 235 (AGDT…DTTI), and 239 to 268 (AGQT…VLRF). Positions 277 to 386 (KRERLKEERR…HRCSSPPPPH (110 aa)) are disordered. Residues 280-296 (RLKEERRAQSVPRDEVA) are compositionally biased toward basic and acidic residues. Polar residues predominate over residues 298 to 312 (SKGSVSAGDTPSSEQ). Over residues 314 to 324 (VARKEEAREEF) the composition is skewed to basic and acidic residues. A compositionally biased stretch (basic residues) spans 363 to 379 (KNLHAHNHPKKRNRHRC). Residues 417-446 (LINKLENQLEATVEEIKAELGSVQDKMNTK) are a coiled coil. A compositionally biased stretch (low complexity) spans 548 to 557 (PAAASDSSPP). Disordered regions lie at residues 548 to 586 (PAAA…CTGS) and 601 to 657 (NEAA…TGPH). Residues 566–584 (LNSTATQRLQQELSSSDCT) are compositionally biased toward polar residues. The segment covering 622–633 (KSGKSGPTRHRA) has biased composition (basic residues). Residues 682-727 (WYERKIEEARSQANQKAQQDKATLKEHIKSLEEELAKLRTRVQKEN) adopt a coiled-coil conformation.

Interacts with AXN1, AXN2 and CSNK1E/CKI-epsilon.

Its function is as follows. Recruits CKI-epsilon to the beta-catenin degradation complex that consists of AXN1 or AXN2 and GSK3-beta and allows efficient phosphorylation of beta-catenin, thereby inhibiting beta-catenin/Tcf signals. This chain is Ankyrin repeat domain-containing protein 6 (ANKRD6), found in Homo sapiens (Human).